The chain runs to 524 residues: GMP synthase [glutamine-hydrolyzing] (524 aa).

The 199-residue stretch at 9-207 (RILILDFGSQ…VIHICQCIPN (199 aa)) folds into the Glutamine amidotransferase type-1 domain. The active-site Nucleophile is cysteine 86. Active-site residues include histidine 181 and glutamate 183. Positions 208–399 (WTTKHIIEDS…LGLPADLIYR (192 aa)) constitute a GMPS ATP-PPase domain. 235 to 241 (SGGVDSA) serves as a coordination point for ATP.

Homodimer.

The enzyme catalyses XMP + L-glutamine + ATP + H2O = GMP + L-glutamate + AMP + diphosphate + 2 H(+). It participates in purine metabolism; GMP biosynthesis; GMP from XMP (L-Gln route): step 1/1. Its function is as follows. Catalyzes the synthesis of GMP from XMP. In Coxiella burnetii (strain RSA 331 / Henzerling II), this protein is GMP synthase [glutamine-hydrolyzing].